The primary structure comprises 382 residues: Aminotransferase FGSG_00049 (382 aa).

Arg80 serves as a coordination point for pyridoxal 5'-phosphate. At Lys181 the chain carries N6-(pyridoxal phosphate)lysine. Glu217 contacts pyridoxal 5'-phosphate.

It belongs to the class-IV pyridoxal-phosphate-dependent aminotransferase family. It depends on pyridoxal 5'-phosphate as a cofactor.

The protein operates within mycotoxin biosynthesis. Aminotransferase; part of the gene cluster that mediates the biosynthesis of gramillins A and B, bicyclic lipopeptides that induce cell death in maize leaves but not in wheat leaves. The nonribosomal peptide synthetase GRA1 incorporates respectively a glutamic adic (Glu), a leucine (Leu), a serine (Ser), a hydroxyglutamine (HOGln), a 2-amino decanoic acid, and 2 cysteins (CysB and CysA). The biosynthesis of 2-amino decanoic acid incorporated in gramillins could be initiated by a fatty acid synthase composed of the alpha and beta subunits FGSG_00036 and FGSG_11656. The cytochrome P450 monooxygenase FGSG_15680 could hydroxylate the fatty acid chain. Subsequent oxidation to the ketone by the oxidoreductase FGSG_00048 and transamination by aminotransferase FGSG_00049 could form 2-amino-decanoic acid. On the other hand, FGSG_15680 could also be responsible for the HO-modified glutamine at the gamma-position. Whether hydroxylation occurs on the fully assembled product or on the Gln residue prior to assembly into the gramillins requires further proof. The thioredoxin FGSG_00043 could also be required for the disulfide-bond formation between CysA and CysB. The specific involvement of the remaining proteins from the cluster is more difficult to discern, but could have broader regulatory (FGSG_00040 and FGSG_11657) or enzymatic functions (FGSG_00044 and FGSG_00045). The final C-domain of GRA1 does not possess the expected sequence of a termination CT domain, often implicated in macrocyclization and release of a cyclopeptidein fungal NRPs; and the thioesterase FGSG_00047 may act in concert with the terminal C-domain of GRA1 to catalyze the formation of the macrocyclic anhydride and release of the products. The polypeptide is Aminotransferase FGSG_00049 (Gibberella zeae (strain ATCC MYA-4620 / CBS 123657 / FGSC 9075 / NRRL 31084 / PH-1) (Wheat head blight fungus)).